Reading from the N-terminus, the 227-residue chain is Cytochrome c oxidase subunit 2 (227 aa).

The Mitochondrial intermembrane segment spans residues 1-14 (MAYPFQLGLQDATS). The helical transmembrane segment at 15-45 (PIMEELLHFHDHTLMIVFLISSLVLYIISLM) threads the bilayer. The Mitochondrial matrix segment spans residues 46–59 (LTTKLTHTSTMDAQ). A helical membrane pass occupies residues 60 to 87 (EVETVWTILPAIILILIALPSLRILYMM). Over 88–227 (DEINNPSLTV…YFETWSALMV (140 aa)) the chain is Mitochondrial intermembrane. Cu cation-binding residues include His161, Cys196, Glu198, Cys200, His204, and Met207. Glu198 provides a ligand contact to Mg(2+). Tyr218 carries the post-translational modification Phosphotyrosine.

The protein belongs to the cytochrome c oxidase subunit 2 family. In terms of assembly, component of the cytochrome c oxidase (complex IV, CIV), a multisubunit enzyme composed of 14 subunits. The complex is composed of a catalytic core of 3 subunits MT-CO1, MT-CO2 and MT-CO3, encoded in the mitochondrial DNA, and 11 supernumerary subunits COX4I, COX5A, COX5B, COX6A, COX6B, COX6C, COX7A, COX7B, COX7C, COX8 and NDUFA4, which are encoded in the nuclear genome. The complex exists as a monomer or a dimer and forms supercomplexes (SCs) in the inner mitochondrial membrane with NADH-ubiquinone oxidoreductase (complex I, CI) and ubiquinol-cytochrome c oxidoreductase (cytochrome b-c1 complex, complex III, CIII), resulting in different assemblies (supercomplex SCI(1)III(2)IV(1) and megacomplex MCI(2)III(2)IV(2)). Found in a complex with TMEM177, COA6, COX18, COX20, SCO1 and SCO2. Interacts with TMEM177 in a COX20-dependent manner. Interacts with COX20. Interacts with COX16. Cu cation is required as a cofactor.

The protein resides in the mitochondrion inner membrane. It catalyses the reaction 4 Fe(II)-[cytochrome c] + O2 + 8 H(+)(in) = 4 Fe(III)-[cytochrome c] + 2 H2O + 4 H(+)(out). In terms of biological role, component of the cytochrome c oxidase, the last enzyme in the mitochondrial electron transport chain which drives oxidative phosphorylation. The respiratory chain contains 3 multisubunit complexes succinate dehydrogenase (complex II, CII), ubiquinol-cytochrome c oxidoreductase (cytochrome b-c1 complex, complex III, CIII) and cytochrome c oxidase (complex IV, CIV), that cooperate to transfer electrons derived from NADH and succinate to molecular oxygen, creating an electrochemical gradient over the inner membrane that drives transmembrane transport and the ATP synthase. Cytochrome c oxidase is the component of the respiratory chain that catalyzes the reduction of oxygen to water. Electrons originating from reduced cytochrome c in the intermembrane space (IMS) are transferred via the dinuclear copper A center (CU(A)) of subunit 2 and heme A of subunit 1 to the active site in subunit 1, a binuclear center (BNC) formed by heme A3 and copper B (CU(B)). The BNC reduces molecular oxygen to 2 water molecules using 4 electrons from cytochrome c in the IMS and 4 protons from the mitochondrial matrix. The protein is Cytochrome c oxidase subunit 2 (MT-CO2) of Canis adustus (Side-striped jackal).